The chain runs to 145 residues: Probable DNA-directed RNA polymerases I and III subunit RPAC2 (145 aa).

Positions 1–52 are disordered; the sequence is MGKKSEKKVVEETMEVDEQPAVEPEAVPEEEPEVEDEDLNVPKKKKMEILDP. A compositionally biased stretch (acidic residues) spans 12–39; sequence ETMEVDEQPAVEPEAVPEEEPEVEDEDL.

Belongs to the archaeal Rpo11/eukaryotic RPB11/RPC19 RNA polymerase subunit family. In terms of assembly, component of the RNA polymerase I (Pol I) and RNA polymerase III (Pol III) complexes consisting of at least 13 and 17 subunits, respectively.

The protein resides in the nucleus. DNA-dependent RNA polymerase catalyzes the transcription of DNA into RNA using the four ribonucleoside triphosphates as substrates. Common core component of RNA polymerases I and III which synthesize ribosomal RNA precursors and small RNAs, such as 5S rRNA and tRNAs, respectively. This is Probable DNA-directed RNA polymerases I and III subunit RPAC2 (rpac-19) from Caenorhabditis briggsae.